The chain runs to 180 residues: Small ribosomal subunit protein bS18 (180 aa).

Disordered stretches follow at residues Met1–Val26 and Tyr53–Ser82.

It belongs to the bacterial ribosomal protein bS18 family. In terms of assembly, part of the 30S ribosomal subunit. Forms a tight heterodimer with protein bS6.

Functionally, binds as a heterodimer with protein bS6 to the central domain of the 16S rRNA, where it helps stabilize the platform of the 30S subunit. The protein is Small ribosomal subunit protein bS18 of Karelsulcia muelleri (strain GWSS) (Sulcia muelleri).